A 475-amino-acid polypeptide reads, in one-letter code: MAEGSVMFSDVSIDFSQEEWDCLDPVQRDLYRDVMLENYSNLVSMGLYTPKPQVISLLEQGKEPWMVGRELTRGLCSDLESMCETKLLSLKKEVYEIELCQREIMGLTKHGLEYSSFGDVLEYRSRLAKQLGYPNGHFSQEIFTPEYMPTFIQQTFLTLQQIMNNEDRPFECKKCGKAFSQNSQFIQHQRIHIGEKSYECKECGKFFSCGSHVTRHLKIHTGEKPFECKECGKAFSCSSYLSQHQRIHTGKKPYECKECGKAFSYCSNLIDHQRIHTGEKPYACKVCGKAFTKSSQLFQHVRIHTGEKPYECKECGKAFTQSSKLVQHQRIHTGEKPYECKECGKAFSSGSALTNHQRIHTGEKPYDCKECGKAFTQSSQLRQHQRIHAGEKPFECLECGKAFTQNSQLFQHQRIHTDEKPYECNECGKAFNKCSNLTRHLRIHTGEKPYNCKECGKAFSSGSDLIRHQGIHTNE.

The region spanning 6–77 is the KRAB domain; the sequence is VMFSDVSIDF…GRELTRGLCS (72 aa). 11 C2H2-type zinc fingers span residues 170 to 192, 198 to 220, 226 to 248, 254 to 276, 282 to 304, 310 to 332, 338 to 360, 366 to 388, 394 to 416, 422 to 444, and 450 to 472; these read FECK…QRIH, YECK…LKIH, YECK…QRIH, YACK…VRIH, YDCK…QRIH, FECL…QRIH, YECN…LRIH, and YNCK…QGIH.

This sequence belongs to the krueppel C2H2-type zinc-finger protein family.

The protein resides in the nucleus. It localises to the cytoplasm. Its function is as follows. May function as a transcriptional repressor, suppressing transcriptional activities mediated by MAPK signaling pathways. The sequence is that of Zinc finger protein 383 (ZNF383) from Macaca fascicularis (Crab-eating macaque).